A 358-amino-acid chain; its full sequence is Trans-enoyl reductase pvhC (358 aa).

48–51 (VDSK) contributes to the NADP(+) binding site. Position 134-141 (134-141 (ISFLTSGL)) interacts with substrate. Residues 169–172 (SSSC), 192–195 (SPHN), Tyr210, and 257–258 (LE) contribute to the NADP(+) site. A substrate-binding site is contributed by 278-282 (GPSLL). Residue 347 to 348 (VS) participates in NADP(+) binding.

It belongs to the zinc-containing alcohol dehydrogenase family. In terms of assembly, monomer.

It functions in the pathway secondary metabolite biosynthesis. Trans-enoyl reductase; part of the gene cluster that mediates the biosynthesis of varicidin A, an antifungal natural product containing a cis-octahydrodecalin core. The PKS module of pvhA together with the enoylreductase pvhC catalyze the formation of the polyketide unit which is then conjugated to L-isoleucine by the condensation domain of the NRPS module. Activity of the Dieckmann cyclase domain (RED) of pvhA results in release of an acyclic tetramate. The cytochrome P450 monooxygenase pvhE then catalyzes the oxidation of the C21 methyl group to a to carboxylate group. The methyltransferase pvhD then further methylates the pvhE product. The Diels-Alderase pvhB is able to catalyze Diels-Alder cycloaddition using both pvhE and pvhD products as substrates to form the decalin ring, yielding varicidin B and A, respectively. This Talaromyces variabilis (Penicillium variabile) protein is Trans-enoyl reductase pvhC.